A 146-amino-acid chain; its full sequence is Ribosome-binding factor A (146 aa).

The disordered stretch occupies residues 122-146 (QQQFGSVDDVTENDIDEADDTEGKA). Residues 130–146 (DVTENDIDEADDTEGKA) show a composition bias toward acidic residues.

Belongs to the RbfA family. In terms of assembly, monomer. Binds 30S ribosomal subunits, but not 50S ribosomal subunits or 70S ribosomes.

It is found in the cytoplasm. Functionally, one of several proteins that assist in the late maturation steps of the functional core of the 30S ribosomal subunit. Associates with free 30S ribosomal subunits (but not with 30S subunits that are part of 70S ribosomes or polysomes). Required for efficient processing of 16S rRNA. May interact with the 5'-terminal helix region of 16S rRNA. The sequence is that of Ribosome-binding factor A from Shewanella sp. (strain MR-7).